The sequence spans 341 residues: UDP-3-O-(3-hydroxymyristoyl)glucosamine N-acyltransferase (341 aa).

Residue His-239 is the Proton acceptor of the active site.

Belongs to the transferase hexapeptide repeat family. LpxD subfamily. In terms of assembly, homotrimer.

The catalysed reaction is a UDP-3-O-[(3R)-3-hydroxyacyl]-alpha-D-glucosamine + a (3R)-hydroxyacyl-[ACP] = a UDP-2-N,3-O-bis[(3R)-3-hydroxyacyl]-alpha-D-glucosamine + holo-[ACP] + H(+). It carries out the reaction UDP-3-O-[(3R)-3-hydroxytetradecanoyl]-alpha-D-glucosamine + (3R)-hydroxytetradecanoyl-[ACP] = UDP-2-N,3-O-bis[(3R)-3-hydroxytetradecanoyl]-alpha-D-glucosamine + holo-[ACP] + H(+). Its pathway is glycolipid biosynthesis; lipid IV(A) biosynthesis; lipid IV(A) from (3R)-3-hydroxytetradecanoyl-[acyl-carrier-protein] and UDP-N-acetyl-alpha-D-glucosamine: step 3/6. Functionally, catalyzes the N-acylation of UDP-3-O-(hydroxytetradecanoyl)glucosamine using 3-hydroxytetradecanoyl-ACP as the acyl donor. Is involved in the biosynthesis of lipid A, a phosphorylated glycolipid that anchors the lipopolysaccharide to the outer membrane of the cell. This chain is UDP-3-O-(3-hydroxymyristoyl)glucosamine N-acyltransferase, found in Salmonella choleraesuis (strain SC-B67).